The sequence spans 94 residues: Co-chaperonin GroES (94 aa).

The protein belongs to the GroES chaperonin family. Heptamer of 7 subunits arranged in a ring. Interacts with the chaperonin GroEL.

The protein localises to the cytoplasm. In terms of biological role, together with the chaperonin GroEL, plays an essential role in assisting protein folding. The GroEL-GroES system forms a nano-cage that allows encapsulation of the non-native substrate proteins and provides a physical environment optimized to promote and accelerate protein folding. GroES binds to the apical surface of the GroEL ring, thereby capping the opening of the GroEL channel. This Shouchella clausii (strain KSM-K16) (Alkalihalobacillus clausii) protein is Co-chaperonin GroES.